The sequence spans 382 residues: D-galactonate dehydratase (382 aa).

Residue Asp-183 participates in Mg(2+) binding. His-185 (proton donor) is an active-site residue. Mg(2+) contacts are provided by Glu-209 and Glu-235. Catalysis depends on His-285, which acts as the Proton acceptor.

The protein belongs to the mandelate racemase/muconate lactonizing enzyme family. GalD subfamily. The cofactor is Mg(2+).

It catalyses the reaction D-galactonate = 2-dehydro-3-deoxy-D-galactonate + H2O. It functions in the pathway carbohydrate acid metabolism; D-galactonate degradation; D-glyceraldehyde 3-phosphate and pyruvate from D-galactonate: step 1/3. In terms of biological role, catalyzes the dehydration of D-galactonate to 2-keto-3-deoxy-D-galactonate. This is D-galactonate dehydratase from Klebsiella pneumoniae (strain 342).